The following is a 1087-amino-acid chain: Formin-H (1087 aa).

Residues 1–23 (MSFDLESNSSGGSTIGRNSSIRL) show a composition bias toward polar residues. The interval 1-25 (MSFDLESNSSGGSTIGRNSSIRLSS) is disordered. Positions 34-394 (VSLNEIIDLD…QLEDELKIHP (361 aa)) constitute a GBD/FH3 domain. Low complexity-rich tracts occupy residues 416-436 (FGFG…SMAK) and 549-558 (SPGSTLSPSP). Disordered stretches follow at residues 416–445 (FGFG…DNEE), 549–625 (SPGS…PAKP), and 1048–1087 (VDSL…QLKK). Positions 433–461 (SMAKTELKKDNEEKQKTIEHLLKQLNKFS) form a coiled coil. The segment covering 569-588 (FGITSSSIHTSTDKLTNSTE) has biased composition (polar residues). The region spanning 589–615 (PILGSPPPPPPPPMSGGGGPPPPPPPP) is the FH1 domain. The segment covering 592-616 (GSPPPPPPPPMSGGGGPPPPPPPPG) has biased composition (pro residues). In terms of domain architecture, FH2 spans 623–1016 (AKPIIKPSVK…ENSKMEDPEK (394 aa)). The DAD domain occupies 1013 to 1051 (DPEKGGLQDLSSQIRSGQLFKDRRVGDSVIAQMQNVDSL).

This sequence belongs to the formin homology family. Diaphanous subfamily. Interacts with vasP, proB/profilin-2 and rac1A. Interacts (via GBD/FH3 domain) with activated Rho-GTPases.

The protein localises to the cytoplasm. It is found in the cell cortex. The protein resides in the cytoskeleton. In terms of biological role, formins play an important role in the nucleation of actin and the formation of linear actin filaments. Important for cell migration and formation, elongation and maintenance of filopodia. Specifically controls filopodial dynamics by regulating actin turnover at the barbed ends of actin filaments. The chain is Formin-H (forH) from Dictyostelium discoideum (Social amoeba).